Here is a 204-residue protein sequence, read N- to C-terminus: MELKQSLSTHLEAEKPLRRYGAVEETAWKTEGLGRNQLDIISMAETTMMPEEIELEMAKIQRLREVLVRRESELRFMMDDIQLCKDIMDLKQELQNLVAIPEKEKTKLQKQREDELIQKIHKLVQKRDFLVDDAEVERLREQEEDKEMADFLRIKLKPLDKVTKSPASSRAEKKAEPPPSKPTVAKTGLALIKDCCGATQCNIM.

Positions 3–150 constitute a bMERB domain; it reads LKQSLSTHLE…EQEEDKEMAD (148 aa). A disordered region spans residues 162–187; it reads VTKSPASSRAEKKAEPPPSKPTVAKT.

The sequence is that of bMERB domain-containing protein 1 (BMERB1) from Pongo abelii (Sumatran orangutan).